The following is a 438-amino-acid chain: Putative B3 domain-containing protein Os04g0676650 (438 aa).

Residues 1 to 11 show a composition bias toward low complexity; sequence MADARGSSSSS. 2 disordered regions span residues 1-30 and 225-285; these read MADA…DFVG and SSSH…MNQN. The span at 12-30 shows a compositional bias: gly residues; that stretch reads GDGGGGEGKGGAGHGDFVG. Positions 258 to 269 are enriched in basic and acidic residues; sequence RRSDMESEKNDD. Residues 272–285 show a composition bias toward polar residues; the sequence is DQTPVSEPPSMNQN. Residues 302 to 404 constitute a DNA-binding region (TF-B3); it reads LRKELTNSDV…KFVVRGEKAI (103 aa).

The protein localises to the nucleus. The protein is Putative B3 domain-containing protein Os04g0676650 of Oryza sativa subsp. japonica (Rice).